Here is a 688-residue protein sequence, read N- to C-terminus: Complement C1s subcomponent (688 aa).

Positions 1–15 are cleaved as a signal peptide; that stretch reads MWCIVLFSLLAWVYA. A CUB 1 domain is found at 16-130; sequence EPTMYGEILS…TGFAAYYVAT (115 aa). Residues E60, D68, D113, D131, I132, and E134 each contribute to the Ca(2+) site. A disulfide bond links C65 and C83. The region spanning 131-172 is the EGF-like; calcium-binding domain; it reads DINECTDFVDVPCSHFCNNFIGGYFCSCPPEYFLHDDMKNCG. Disulfide bonds link C135–C147, C143–C156, and C158–C171. Residues N149, F150, and G153 each coordinate Ca(2+). (3R)-3-hydroxyasparagine is present on N149. N174 carries an N-linked (GlcNAc...) asparagine glycan. A disulfide bridge connects residues C175 and C202. The region spanning 175-290 is the CUB 2 domain; it reads CSGDVFTALI…KGWKLRYHGD (116 aa). Positions 226, 236, 275, 278, and 279 each coordinate Ca(2+). C234 and C251 are oxidised to a cystine. 2 consecutive Sushi domains span residues 292–356 and 357–423; these read MPCP…KCQP and VDCG…KCVP. Intrachain disulfides connect C294–C341, C321–C354, C359–C403, C386–C421, C425–C549, C595–C618, and C628–C659. N406 carries N-linked (GlcNAc...) asparagine glycosylation. The Peptidase S1 domain maps to 438 to 680; it reads IIGGSDADIK…YVDWIMKTMQ (243 aa). Catalysis depends on charge relay system residues H475 and D529. Residue S632 is the Charge relay system of the active site.

This sequence belongs to the peptidase S1 family. Core component of the complement C1 complex, a calcium-dependent complex composed of 1 molecule of the C1Q subcomplex, 2 molecules of C1R and 2 molecules of C1S. The C1Q subcomplex is composed 18 subunits: 3 chains of C1QA, C1QB, and C1QC trimerize to form 6 collagen-like triple helices connected to six globular ligand-recognition modules. In terms of processing, cleaved and activated by C1R to generate Complement C1s subcomponent heavy and light chains. The iron and 2-oxoglutarate dependent 3-hydroxylation of aspartate and asparagine is (R) stereospecific within EGF domains.

Its subcellular location is the secreted. It is found in the cell surface. It catalyses the reaction Cleavage of Arg-|-Ala bond in complement component C4 to form C4a and C4b, and Lys(or Arg)-|-Lys bond in complement component C2 to form C2a and C2b: the 'classical' pathway C3 convertase.. With respect to regulation, cleaved and activated by C1R. Immunoglobulin-binding promotes autoactivation of C1R, which results in the cleavage of the Arg-Ile bond in the catalytic domain. Inhibited by C1 inhibitor (SERPING1). Its function is as follows. Component of the complement C1 complex, a multiprotein complex that initiates the classical pathway of the complement system, a cascade of proteins that leads to phagocytosis and breakdown of pathogens and signaling that strengthens the adaptive immune system. C1S is activated following association of the C1 complex with immunoglobulins (IgG or IgM) complexed with antigens to form antigen-antibody complexes on the surface of pathogens. C1S is cleaved and activated by C1R to generate C1s subcomponent heavy and light chains. C1s subcomponent light chain then cleaves and activates C2 and C4, the next components of the classical complement pathway. Serine protease component of the complement C1 complex, which catalyzes cleavage and activation of C2 and C4, the next components of the classical complement pathway. Also able to cleave C1 inhibitor (SERPING1) in vitro; additional evidence is however required to confirm this result in vivo. Also cleaves IGFBP5 and thereby inhibits the trophic effects of IGF1. The chain is Complement C1s subcomponent from Homo sapiens (Human).